The primary structure comprises 356 residues: NADH-quinone oxidoreductase subunit H (356 aa).

Helical transmembrane passes span I18–I38, G87–I107, V120–G140, I166–V186, W202–V222, A265–I285, W292–M312, and L328–L348.

This sequence belongs to the complex I subunit 1 family. As to quaternary structure, NDH-1 is composed of 14 different subunits. Subunits NuoA, H, J, K, L, M, N constitute the membrane sector of the complex.

The protein localises to the cell inner membrane. It carries out the reaction a quinone + NADH + 5 H(+)(in) = a quinol + NAD(+) + 4 H(+)(out). NDH-1 shuttles electrons from NADH, via FMN and iron-sulfur (Fe-S) centers, to quinones in the respiratory chain. The immediate electron acceptor for the enzyme in this species is believed to be ubiquinone. Couples the redox reaction to proton translocation (for every two electrons transferred, four hydrogen ions are translocated across the cytoplasmic membrane), and thus conserves the redox energy in a proton gradient. This subunit may bind ubiquinone. This is NADH-quinone oxidoreductase subunit H from Nitrobacter hamburgensis (strain DSM 10229 / NCIMB 13809 / X14).